The chain runs to 978 residues: Copper-transporting ATPase HMA4 (978 aa).

A compositionally biased stretch (basic and acidic residues) spans 1 to 11; it reads MEQNGENHLKD. The interval 1-35 is disordered; sequence MEQNGENHLKDPLLQADGGGSGASPAGASPRKERK. HMA domains follow at residues 37 to 103, 111 to 177, and 186 to 252; these read RKVM…FEVD, AVCR…FGAD, and NKVH…QPPK. Cu(+) contacts are provided by cysteine 48, cysteine 51, cysteine 122, and cysteine 125. The next 8 membrane-spanning stretches (helical) occupy residues 280 to 300, 315 to 335, 352 to 372, 385 to 405, 545 to 565, 584 to 604, 907 to 927, and 935 to 955; these read FLWS…LPMI, MTIG…IIGW, MDVL…YIVL, FFET…LEVV, FFVP…FVAG, LALQ…LGLA, VWAL…LFPF, and WLAG…SLLL.

Belongs to the cation transport ATPase (P-type) (TC 3.A.3) family. Type IB subfamily. In terms of tissue distribution, highly expressed in roots. Expressed in vascular tissues of the stele, mainly in pericycle cells.

The protein localises to the vacuole membrane. It carries out the reaction Cu(+)(in) + ATP + H2O = Cu(+)(out) + ADP + phosphate + H(+). Its function is as follows. Copper (Cu) transporter that mediates Cu transport in root vacuoles. Involved in Cu detoxification by sequestrating Cu into root vacuoles and limiting translocation of Cu from the roots to the shoots, and accumulation in grains. This Oryza sativa subsp. japonica (Rice) protein is Copper-transporting ATPase HMA4.